Consider the following 204-residue polypeptide: Thymidylate kinase (204 aa).

11–18 (GLDKSGKT) provides a ligand contact to ATP.

This sequence belongs to the thymidylate kinase family.

The catalysed reaction is dTMP + ATP = dTDP + ADP. The protein operates within pyrimidine metabolism; dTTP biosynthesis. In Ectromelia virus (strain Moscow) (ECTV), this protein is Thymidylate kinase (TMK).